The sequence spans 409 residues: O-glucosyltransferase rumi (409 aa).

The signal sequence occupies residues 1–20 (MLINVVLIILLVGLNGKASG). 4 disulfide bridges follow: C62-C73, C71-C376, C118-C124, and C280-C303. The active-site Proton donor/acceptor is D149. The interval 190–195 (ATKLHP) is interaction with the consensus sequence C-X-S-X-[PA]-C in peptide substrates. UDP-alpha-D-glucose is bound by residues 227–231 (RGSRT), R235, 274–276 (VSF), and 292–296 (AASFR). A Prevents secretion from ER motif is present at residues 406–409 (KDEL).

This sequence belongs to the glycosyltransferase 90 family.

It is found in the endoplasmic reticulum lumen. It functions in the pathway protein modification; protein glycosylation. In terms of biological role, protein O-glucosyltransferase. Catalyzes the reaction that attaches glucose through an O-glycosidic linkage to a conserved serine residue found in the consensus sequence C-X-S-X-[PA]-C in epidermal growth factor-like repeats. Regulates Notch signaling by glucosylating Notch in the ER, glucosylation is required for the correct folding and cleavage of Notch. This is O-glucosyltransferase rumi from Drosophila pseudoobscura pseudoobscura (Fruit fly).